Consider the following 293-residue polypeptide: Phosphoribosylaminoimidazole-succinocarboxamide synthase (293 aa).

This sequence belongs to the SAICAR synthetase family.

The enzyme catalyses 5-amino-1-(5-phospho-D-ribosyl)imidazole-4-carboxylate + L-aspartate + ATP = (2S)-2-[5-amino-1-(5-phospho-beta-D-ribosyl)imidazole-4-carboxamido]succinate + ADP + phosphate + 2 H(+). It functions in the pathway purine metabolism; IMP biosynthesis via de novo pathway; 5-amino-1-(5-phospho-D-ribosyl)imidazole-4-carboxamide from 5-amino-1-(5-phospho-D-ribosyl)imidazole-4-carboxylate: step 1/2. This is Phosphoribosylaminoimidazole-succinocarboxamide synthase from Bordetella petrii (strain ATCC BAA-461 / DSM 12804 / CCUG 43448).